A 182-amino-acid polypeptide reads, in one-letter code: T-cell surface glycoprotein CD3 gamma chain (182 aa).

Positions 1–22 (MEQGKHLAGLILAITLLQGTMA) are cleaved as a signal peptide. The 76-residue stretch at 23–98 (QLKEGKHSVL…GSKENSKRLQ (76 aa)) folds into the Ig-like domain. The Extracellular segment spans residues 23–116 (QLKEGKHSVL…CIELNSATVS (94 aa)). Cysteine 46 and cysteine 87 form a disulfide bridge. N-linked (GlcNAc...) asparagine glycosylation occurs at asparagine 66. Residues 117-137 (GFIFTEIISLFFLAVGVYFIA) traverse the membrane as a helical segment. Residues 138 to 182 (GQDGVRQSRASDKQTLLSNDQLYQPLKDREDDQYSHLQGNNSRKN) lie on the Cytoplasmic side of the membrane. Residue serine 145 is modified to Phosphoserine. Position 148 is a phosphoserine; by PKC (serine 148). In terms of domain architecture, ITAM spans 149 to 177 (DKQTLLSNDQLYQPLKDREDDQYSHLQGN). The Di-leucine motif signature appears at 153–154 (LL).

As to quaternary structure, the TCR-CD3 complex is composed of a CD3D/CD3E and a CD3G/CD3E heterodimers that preferentially associate with TCRalpha and TCRbeta, respectively, to form TCRalpha/CD3E/CD3G and TCRbeta/CD3G/CD3E trimers. In turn, the hexamer interacts with CD3Z homodimer to form the TCR-CD3 complex. Alternatively, TCRalpha and TCRbeta can be replaced by TCRgamma and TCRdelta. Phosphorylated on Tyr residues after T-cell receptor triggering by LCK in association with CD4/CD8. Phosphorylated also by PKC; leading to the TCR complex down-regulation. Post-translationally, phosphorylated on Tyr residues after T-cell receptor triggering by LCK in association with CD4/CD8.

It is found in the cell membrane. In terms of biological role, part of the TCR-CD3 complex present on T-lymphocyte cell surface that plays an essential role in adaptive immune response. When antigen presenting cells (APCs) activate T-cell receptor (TCR), TCR-mediated signals are transmitted across the cell membrane by the CD3 chains CD3D, CD3E, CD3G and CD3Z. All CD3 chains contain immunoreceptor tyrosine-based activation motifs (ITAMs) in their cytoplasmic domain. Upon TCR engagement, these motifs become phosphorylated by Src family protein tyrosine kinases LCK and FYN, resulting in the activation of downstream signaling pathways. In addition to this role of signal transduction in T-cell activation, CD3G plays an essential role in the dynamic regulation of TCR expression at the cell surface. Indeed, constitutive TCR cycling is dependent on the di-leucine-based (diL) receptor-sorting motif present in CD3G. This Sus scrofa (Pig) protein is T-cell surface glycoprotein CD3 gamma chain (CD3G).